The chain runs to 270 residues: Glucan endo-1,3-beta-glucosidase (270 aa).

Residues methionine 1–glycine 18 form the signal peptide. The GH16 domain maps to leucine 22–asparagine 270. Glutamate 137 functions as the Nucleophile in the catalytic mechanism. Glutamate 142 (proton donor) is an active-site residue.

The protein belongs to the glycosyl hydrolase 16 family.

Its subcellular location is the secreted. The enzyme catalyses Hydrolysis of (1-&gt;3)-beta-D-glucosidic linkages in (1-&gt;3)-beta-D-glucans.. Its activity is regulated as follows. Ca(2+) does not affect the enzyme activity nor the thermostability. Other cations, such as Mg(2+), Mn(2+), Cu(2+), Zn(2+), Ag(+) or Hg(2+) do not cause any serious adverse effect on the activity. Also no significant change in the activity in response to the addition of 1 mM EDTA. Its function is as follows. Hydrolyzes laminarin majorily to glucose (G1), laminaribiose (L2), laminaritriose (L3), laminaritetraose (L4) and laminaripentaose (L5). Hydrolyzes laminarioligosaccharides L3, L4, L5 and laminarihexaose (L6) to G1, L2 and L3. Hardly hydrolyzes L2. Does not hydrolyze lichenan, pustulan, carboxymethyl cellulose, locust bean gum or soluble starch. This is Glucan endo-1,3-beta-glucosidase from Cryptopygus antarcticus (Antarctic springtail).